Consider the following 177-residue polypeptide: Disulfide bond formation protein B (177 aa).

At 1–14 (MMVWNWIDRTPRRV) the chain is on the cytoplasmic side. The chain crosses the membrane as a helical span at residues 15–31 (LALISLACVALLACGLY). At 32–49 (LQHVVGLVPCPMCIVQRY) the chain is on the periplasmic side. The cysteines at positions 41 and 44 are disulfide-linked. Residues 50–64 (ALIGLALLTGLASAR) traverse the membrane as a helical segment. Residues 65–70 (SAKGWW) lie on the Cytoplasmic side of the membrane. The helical transmembrane segment at 71-89 (LTLSALAALTAGFGATVAA) threads the bilayer. The Periplasmic portion of the chain corresponds to 90-145 (RQSWLQWYPPQSVSCGRDFYGMIESFPLSRAIPMILRGSGDCAAVDWSLLGGSIAN). Cysteine 104 and cysteine 131 are disulfide-bonded. A helical membrane pass occupies residues 146–164 (WSFLCFALLGLLLLALLAR). The Cytoplasmic portion of the chain corresponds to 165–177 (GVRGARQRAPAPV).

Belongs to the DsbB family.

The protein localises to the cell inner membrane. Its function is as follows. Required for disulfide bond formation in some periplasmic proteins. Acts by oxidizing the DsbA protein. The chain is Disulfide bond formation protein B from Verminephrobacter eiseniae (strain EF01-2).